The primary structure comprises 146 residues: D-aminoacyl-tRNA deacylase (146 aa).

The Gly-cisPro motif, important for rejection of L-amino acids motif lies at 137–138; it reads GP.

Belongs to the DTD family. In terms of assembly, homodimer.

The protein resides in the cytoplasm. It catalyses the reaction glycyl-tRNA(Ala) + H2O = tRNA(Ala) + glycine + H(+). It carries out the reaction a D-aminoacyl-tRNA + H2O = a tRNA + a D-alpha-amino acid + H(+). Its function is as follows. An aminoacyl-tRNA editing enzyme that deacylates mischarged D-aminoacyl-tRNAs. Also deacylates mischarged glycyl-tRNA(Ala), protecting cells against glycine mischarging by AlaRS. Acts via tRNA-based rather than protein-based catalysis; rejects L-amino acids rather than detecting D-amino acids in the active site. By recycling D-aminoacyl-tRNA to D-amino acids and free tRNA molecules, this enzyme counteracts the toxicity associated with the formation of D-aminoacyl-tRNA entities in vivo and helps enforce protein L-homochirality. The polypeptide is D-aminoacyl-tRNA deacylase (Desulfatibacillum aliphaticivorans).